The chain runs to 258 residues: Imidazole glycerol phosphate synthase subunit HisF (258 aa).

Catalysis depends on residues Asp12 and Asp131.

This sequence belongs to the HisA/HisF family. As to quaternary structure, heterodimer of HisH and HisF.

The protein resides in the cytoplasm. It catalyses the reaction 5-[(5-phospho-1-deoxy-D-ribulos-1-ylimino)methylamino]-1-(5-phospho-beta-D-ribosyl)imidazole-4-carboxamide + L-glutamine = D-erythro-1-(imidazol-4-yl)glycerol 3-phosphate + 5-amino-1-(5-phospho-beta-D-ribosyl)imidazole-4-carboxamide + L-glutamate + H(+). The protein operates within amino-acid biosynthesis; L-histidine biosynthesis; L-histidine from 5-phospho-alpha-D-ribose 1-diphosphate: step 5/9. IGPS catalyzes the conversion of PRFAR and glutamine to IGP, AICAR and glutamate. The HisF subunit catalyzes the cyclization activity that produces IGP and AICAR from PRFAR using the ammonia provided by the HisH subunit. In Pseudarthrobacter chlorophenolicus (strain ATCC 700700 / DSM 12829 / CIP 107037 / JCM 12360 / KCTC 9906 / NCIMB 13794 / A6) (Arthrobacter chlorophenolicus), this protein is Imidazole glycerol phosphate synthase subunit HisF.